The primary structure comprises 158 residues: FUN14 domain-containing protein 1 (158 aa).

The short motif at 21-24 (YEVV) is the YXXL element. A run of 2 helical transmembrane segments spans residues 51–70 (YSVTTQLVMGGLTGWCAGYL) and 77–98 (IAATAVGGGFLLLQIANHSGYV).

Belongs to the FUN14 family.

The protein localises to the mitochondrion outer membrane. Functionally, acts as an activator of hypoxia-induced mitophagy, an important mechanism for mitochondrial quality control. This is FUN14 domain-containing protein 1 (fundc1) from Tetraodon nigroviridis (Spotted green pufferfish).